The following is a 193-amino-acid chain: dCTP deaminase (193 aa).

Residues 110–115 (RSSLAR), Asp128, 136–138 (VLE), Tyr171, Lys178, and Gln182 each bind dCTP. Glu138 acts as the Proton donor/acceptor in catalysis.

The protein belongs to the dCTP deaminase family. Homotrimer.

The enzyme catalyses dCTP + H2O + H(+) = dUTP + NH4(+). It participates in pyrimidine metabolism; dUMP biosynthesis; dUMP from dCTP (dUTP route): step 1/2. Functionally, catalyzes the deamination of dCTP to dUTP. This chain is dCTP deaminase, found in Buchnera aphidicola subsp. Schizaphis graminum (strain Sg).